Consider the following 525-residue polypeptide: Light-independent protochlorophyllide reductase subunit B (525 aa).

Residue aspartate 36 coordinates [4Fe-4S] cluster. Aspartate 286 functions as the Proton donor in the catalytic mechanism. Residue glycine 421–leucine 422 coordinates substrate.

The protein belongs to the ChlB/BchB/BchZ family. In terms of assembly, protochlorophyllide reductase is composed of three subunits; ChlL, ChlN and ChlB. Forms a heterotetramer of two ChlB and two ChlN subunits. [4Fe-4S] cluster is required as a cofactor.

The enzyme catalyses chlorophyllide a + oxidized 2[4Fe-4S]-[ferredoxin] + 2 ADP + 2 phosphate = protochlorophyllide a + reduced 2[4Fe-4S]-[ferredoxin] + 2 ATP + 2 H2O. It functions in the pathway porphyrin-containing compound metabolism; chlorophyll biosynthesis (light-independent). Component of the dark-operative protochlorophyllide reductase (DPOR) that uses Mg-ATP and reduced ferredoxin to reduce ring D of protochlorophyllide (Pchlide) to form chlorophyllide a (Chlide). This reaction is light-independent. The NB-protein (ChlN-ChlB) is the catalytic component of the complex. This Prochlorococcus marinus (strain NATL1A) protein is Light-independent protochlorophyllide reductase subunit B.